We begin with the raw amino-acid sequence, 151 residues long: MGIGACALARSPVKIKTFGLGSCVVITLYDRQERIGGLVHTMLPSISDARIKDKPFKYTDSGIEHLATEILREGSPRKRFEAKLVGGAHMFENRNLNIGERNIKYAKNTLEKFEIPIISEDTGKNYGRTITLDTSTGDLLIRTILRADKII.

The protein belongs to the CheD family.

The enzyme catalyses L-glutaminyl-[protein] + H2O = L-glutamyl-[protein] + NH4(+). Its function is as follows. Probably deamidates glutamine residues to glutamate on methyl-accepting chemotaxis receptors (MCPs), playing an important role in chemotaxis. This Methanosarcina barkeri (strain Fusaro / DSM 804) protein is Probable chemoreceptor glutamine deamidase CheD.